The chain runs to 250 residues: Ribonuclease PH (250 aa).

Residues R86 and 124-126 (GTR) contribute to the phosphate site.

The protein belongs to the RNase PH family. As to quaternary structure, homohexameric ring arranged as a trimer of dimers.

The catalysed reaction is tRNA(n+1) + phosphate = tRNA(n) + a ribonucleoside 5'-diphosphate. Functionally, phosphorolytic 3'-5' exoribonuclease that plays an important role in tRNA 3'-end maturation. Removes nucleotide residues following the 3'-CCA terminus of tRNAs; can also add nucleotides to the ends of RNA molecules by using nucleoside diphosphates as substrates, but this may not be physiologically important. Probably plays a role in initiation of 16S rRNA degradation (leading to ribosome degradation) during starvation. This chain is Ribonuclease PH, found in Exiguobacterium sibiricum (strain DSM 17290 / CCUG 55495 / CIP 109462 / JCM 13490 / 255-15).